We begin with the raw amino-acid sequence, 282 residues long: Phycocyanobilin lyase subunit beta (282 aa).

It belongs to the CpcE/RpcE/PecE family. CpcE and CpcF associate to form a lyase.

In terms of biological role, required for the chromophorylation of the CpcA gene product. The protein is Phycocyanobilin lyase subunit beta (cpcF1) of Pseudanabaena tenuis (strain PCC 7409).